The following is a 302-amino-acid chain: HTH-type transcriptional regulator AbgR (302 aa).

In terms of domain architecture, HTH lysR-type spans 5 to 62; that stretch reads VKIHQIRAFVEVARQGSIRGASRMLNMSQPALSKSIQELEEGLAAQLFFRRSKGVTLT. The segment at residues 22 to 41 is a DNA-binding region (H-T-H motif); that stretch reads IRGASRMLNMSQPALSKSIQ.

Belongs to the LysR transcriptional regulatory family.

Could be the regulator of the abg operon. The polypeptide is HTH-type transcriptional regulator AbgR (abgR) (Escherichia coli (strain K12)).